A 249-amino-acid chain; its full sequence is MADS-box transcription factor 7 (249 aa).

The MADS-box domain maps to 1-61 (MGRGRVELKR…GKLYEFCSTQ (61 aa)). Residues 90 to 180 (LKASRNEYLK…RRKLEESNHV (91 aa)) enclose the K-box domain.

In terms of assembly, may interact with the K-box of MADS6. May interact with MADS13 and MADS18. As to expression, expressed in lodicules, stamens and carpels.

The protein resides in the nucleus. Probable transcription factor. May be involved in the control of flowering time. This Oryza sativa subsp. japonica (Rice) protein is MADS-box transcription factor 7 (MADS7).